A 634-amino-acid polypeptide reads, in one-letter code: Probable potassium transport system protein Kup (634 aa).

12 consecutive transmembrane segments (helical) span residues 21 to 41 (LVIG…LYTL), 58 to 78 (VLGI…LKYV), 110 to 130 (MYVV…DGVI), 152 to 172 (PFVV…QRFG), 179 to 199 (AFGP…VYNM), 223 to 243 (WHAV…EALY), 258 to 278 (WQFV…ALML), 296 to 316 (ALYP…QALI), 348 to 368 (IYVP…VIGF), 377 to 397 (AYGV…IIYA), 403 to 423 (VPAP…CAFF), and 427 to 447 (IIKF…LFTL).

This sequence belongs to the HAK/KUP transporter (TC 2.A.72) family.

It is found in the cell inner membrane. The catalysed reaction is K(+)(in) + H(+)(in) = K(+)(out) + H(+)(out). Functionally, transport of potassium into the cell. Likely operates as a K(+):H(+) symporter. This chain is Probable potassium transport system protein Kup, found in Xanthomonas euvesicatoria pv. vesicatoria (strain 85-10) (Xanthomonas campestris pv. vesicatoria).